The primary structure comprises 352 residues: MAIISSNIDDNDFSLRKKELRLVDSKVIPEEKKNNNLNLARPLNFKEFIGQEQLKSSLRIAIDASIFRKEPLEHTLLYGQPGLGKTTLAFLIAHELKTKCRIATAPAIERPRDIVGLLLGLKEGEVLFIDEIHRLNRLTEELLYSAMEDFRLDLTMGANRGARCRTINLPRFTLIGATTKLASISAPLRDRFGISQKIEFYTYDELKQIIVNFSRLINLNLDDEASYDLAKISRGTPRIALRLLRRVRDYAQVVMKTNNISVNLIKKALNSYQIDEKGLDSLDRNYLFFLNQNKNIPIGLDSIAAGLGDDSSMLEFVVEPYLIKIGFLTRTPRGRLLTALGKKYIDSKNENF.

The large ATPase domain (RuvB-L) stretch occupies residues Phe13–Tyr201. Residues Arg41, Gly82, Lys85, Thr86, Thr87, Glu148 to Phe150, Arg191, Tyr201, and Arg238 each bind ATP. A Mg(2+)-binding site is contributed by Thr86. Residues Thr202–Gln273 are small ATPAse domain (RuvB-S). Positions Glu276–Phe352 are head domain (RuvB-H). DNA is bound by residues Arg330 and Arg335.

This sequence belongs to the RuvB family. As to quaternary structure, homohexamer. Forms an RuvA(8)-RuvB(12)-Holliday junction (HJ) complex. HJ DNA is sandwiched between 2 RuvA tetramers; dsDNA enters through RuvA and exits via RuvB. An RuvB hexamer assembles on each DNA strand where it exits the tetramer. Each RuvB hexamer is contacted by two RuvA subunits (via domain III) on 2 adjacent RuvB subunits; this complex drives branch migration. In the full resolvosome a probable DNA-RuvA(4)-RuvB(12)-RuvC(2) complex forms which resolves the HJ.

Its subcellular location is the cytoplasm. The catalysed reaction is ATP + H2O = ADP + phosphate + H(+). Its function is as follows. The RuvA-RuvB-RuvC complex processes Holliday junction (HJ) DNA during genetic recombination and DNA repair, while the RuvA-RuvB complex plays an important role in the rescue of blocked DNA replication forks via replication fork reversal (RFR). RuvA specifically binds to HJ cruciform DNA, conferring on it an open structure. The RuvB hexamer acts as an ATP-dependent pump, pulling dsDNA into and through the RuvAB complex. RuvB forms 2 homohexamers on either side of HJ DNA bound by 1 or 2 RuvA tetramers; 4 subunits per hexamer contact DNA at a time. Coordinated motions by a converter formed by DNA-disengaged RuvB subunits stimulates ATP hydrolysis and nucleotide exchange. Immobilization of the converter enables RuvB to convert the ATP-contained energy into a lever motion, pulling 2 nucleotides of DNA out of the RuvA tetramer per ATP hydrolyzed, thus driving DNA branch migration. The RuvB motors rotate together with the DNA substrate, which together with the progressing nucleotide cycle form the mechanistic basis for DNA recombination by continuous HJ branch migration. Branch migration allows RuvC to scan DNA until it finds its consensus sequence, where it cleaves and resolves cruciform DNA. The polypeptide is Holliday junction branch migration complex subunit RuvB (Prochlorococcus marinus (strain MIT 9215)).